The chain runs to 75 residues: Sec-independent protein translocase protein TatA (75 aa).

Residues 1-21 (MGGFSIWHWLIVLVIVLLVFG) traverse the membrane as a helical segment. The tract at residues 41–75 (KGMHDDDKPAGKLGDDSRTAEQAREAQAERDRDAR) is disordered.

This sequence belongs to the TatA/E family. In terms of assembly, the Tat system comprises two distinct complexes: a TatABC complex, containing multiple copies of TatA, TatB and TatC subunits, and a separate TatA complex, containing only TatA subunits. Substrates initially bind to the TatABC complex, which probably triggers association of the separate TatA complex to form the active translocon.

It localises to the cell inner membrane. In terms of biological role, part of the twin-arginine translocation (Tat) system that transports large folded proteins containing a characteristic twin-arginine motif in their signal peptide across membranes. TatA could form the protein-conducting channel of the Tat system. The protein is Sec-independent protein translocase protein TatA of Xanthomonas axonopodis pv. citri (strain 306).